A 92-amino-acid polypeptide reads, in one-letter code: MELAFRESLKKMRGTKSKEKFSQELEMSRSNYSRIESGKSDPTIKTLEQIVKLTNSTLVVDLIPNEPTEPEPETEQVTLELEMEEEKSNDFV.

Residues 1 to 27 are compositionally biased toward basic and acidic residues; the sequence is MELAFRESLKKMRGTKSKEKFSQELEM. 2 disordered regions span residues 1–40 and 63–92; these read MELAFRESLKKMRGTKSKEKFSQELEMSRSNYSRIESGKS and IPNEPTEPEPETEQVTLELEMEEEKSNDFV. An HTH cro/C1-type domain is found at 9–62; sequence LKKMRGTKSKEKFSQELEMSRSNYSRIESGKSDPTIKTLEQIVKLTNSTLVVDL. The H-T-H motif DNA-binding region spans 20–39; sequence KFSQELEMSRSNYSRIESGK.

Its function is as follows. Involved in copy control of plasmid pIP501. The polypeptide is Plasmid copy control protein CopR (copR) (Streptococcus agalactiae).